The sequence spans 258 residues: Acyl-[acyl-carrier-protein]--UDP-N-acetylglucosamine O-acyltransferase (258 aa).

The protein belongs to the transferase hexapeptide repeat family. LpxA subfamily. In terms of assembly, homotrimer.

The protein resides in the cytoplasm. It catalyses the reaction a (3R)-hydroxyacyl-[ACP] + UDP-N-acetyl-alpha-D-glucosamine = a UDP-3-O-[(3R)-3-hydroxyacyl]-N-acetyl-alpha-D-glucosamine + holo-[ACP]. Its pathway is glycolipid biosynthesis; lipid IV(A) biosynthesis; lipid IV(A) from (3R)-3-hydroxytetradecanoyl-[acyl-carrier-protein] and UDP-N-acetyl-alpha-D-glucosamine: step 1/6. Its function is as follows. Involved in the biosynthesis of lipid A, a phosphorylated glycolipid that anchors the lipopolysaccharide to the outer membrane of the cell. The protein is Acyl-[acyl-carrier-protein]--UDP-N-acetylglucosamine O-acyltransferase of Pseudomonas savastanoi pv. phaseolicola (strain 1448A / Race 6) (Pseudomonas syringae pv. phaseolicola (strain 1448A / Race 6)).